The primary structure comprises 128 residues: Small ribosomal subunit protein eS8 (128 aa).

It belongs to the eukaryotic ribosomal protein eS8 family. In terms of assembly, part of the 30S ribosomal subunit.

This Methanococcus maripaludis (strain C6 / ATCC BAA-1332) protein is Small ribosomal subunit protein eS8.